Here is a 213-residue protein sequence, read N- to C-terminus: Thiamine-phosphate synthase (213 aa).

4-amino-2-methyl-5-(diphosphooxymethyl)pyrimidine-binding positions include 40-44 (QFREK) and Asn75. Positions 76 and 95 each coordinate Mg(2+). Ser113 lines the 4-amino-2-methyl-5-(diphosphooxymethyl)pyrimidine pocket. 139–141 (TPS) provides a ligand contact to 2-[(2R,5Z)-2-carboxy-4-methylthiazol-5(2H)-ylidene]ethyl phosphate. Lys142 contributes to the 4-amino-2-methyl-5-(diphosphooxymethyl)pyrimidine binding site. Residues Gly171 and 191–192 (IS) each bind 2-[(2R,5Z)-2-carboxy-4-methylthiazol-5(2H)-ylidene]ethyl phosphate.

It belongs to the thiamine-phosphate synthase family. Requires Mg(2+) as cofactor.

It carries out the reaction 2-[(2R,5Z)-2-carboxy-4-methylthiazol-5(2H)-ylidene]ethyl phosphate + 4-amino-2-methyl-5-(diphosphooxymethyl)pyrimidine + 2 H(+) = thiamine phosphate + CO2 + diphosphate. It catalyses the reaction 2-(2-carboxy-4-methylthiazol-5-yl)ethyl phosphate + 4-amino-2-methyl-5-(diphosphooxymethyl)pyrimidine + 2 H(+) = thiamine phosphate + CO2 + diphosphate. The enzyme catalyses 4-methyl-5-(2-phosphooxyethyl)-thiazole + 4-amino-2-methyl-5-(diphosphooxymethyl)pyrimidine + H(+) = thiamine phosphate + diphosphate. Its pathway is cofactor biosynthesis; thiamine diphosphate biosynthesis; thiamine phosphate from 4-amino-2-methyl-5-diphosphomethylpyrimidine and 4-methyl-5-(2-phosphoethyl)-thiazole: step 1/1. Its function is as follows. Condenses 4-methyl-5-(beta-hydroxyethyl)thiazole monophosphate (THZ-P) and 2-methyl-4-amino-5-hydroxymethyl pyrimidine pyrophosphate (HMP-PP) to form thiamine monophosphate (TMP). This is Thiamine-phosphate synthase from Staphylococcus aureus (strain bovine RF122 / ET3-1).